The following is an 890-amino-acid chain: UPF0182 protein SYNW1212 (890 aa).

A run of 8 helical transmembrane segments spans residues 21-41 (WLLQLASAVVALLPIGLAIRW), 64-84 (LTLLLAIALQLVSLAVINGLI), 98-118 (WQVSIHQSQLPVLTLISLVAV), 134-154 (AVVLIAARAWGVWALAWSIPL), 173-193 (FAALQLLIALLSSGALFCLGN), 219-239 (RLLMLMAALVLVLLAGQCWLS), 268-288 (LLTVELLLLALAVMLPSSLLL), and 295-315 (VLAVTLALGFSLTPLSRWLIL).

The protein belongs to the UPF0182 family.

The protein localises to the cell membrane. The protein is UPF0182 protein SYNW1212 of Parasynechococcus marenigrum (strain WH8102).